A 479-amino-acid polypeptide reads, in one-letter code: GTPase Der (479 aa).

EngA-type G domains are found at residues 3–166 (PVVA…AEEY) and 192–365 (LKLA…ASAT). GTP is bound by residues 9–16 (GRPNVGKS), 56–60 (DTGGI), 118–121 (NKID), 198–205 (GRPNVGKS), 245–249 (DTAGV), and 310–313 (NKWD). The KH-like domain occupies 366–450 (QRISTSKLTK…PIKVEFREPV (85 aa)).

The protein belongs to the TRAFAC class TrmE-Era-EngA-EngB-Septin-like GTPase superfamily. EngA (Der) GTPase family. In terms of assembly, associates with the 50S ribosomal subunit.

GTPase that plays an essential role in the late steps of ribosome biogenesis. The polypeptide is GTPase Der (Idiomarina loihiensis (strain ATCC BAA-735 / DSM 15497 / L2-TR)).